The following is a 137-amino-acid chain: Interferon-induced transmembrane protein 3 (137 aa).

At 1–57 (MNHTSQAFVNAATGGQPPNYERIKEEYEVSELGAPHGSASVRTTVINMPREVSVPDH) the chain is on the cytoplasmic side. At Tyr-20 the chain carries Phosphotyrosine. A Glycyl lysine isopeptide (Lys-Gly) (interchain with G-Cter in ubiquitin) cross-link involves residue Lys-24. At Tyr-27 the chain carries Phosphotyrosine. An intramembrane region (helical) is located at residues 58–78 (VVWSLFNTLFMNFCCLGFIAY). Positions 60-93 (WSLFNTLFMNFCCLGFIAYAYSVKSRDRKMVGDM) are interaction with SPP1. Residues Cys-71 and Cys-72 are each lipidated (S-palmitoyl cysteine). Topologically, residues 79–109 (AYSVKSRDRKMVGDMTGAQAYASTAKCLNIS) are cytoplasmic. Residues Lys-83, Lys-88, and Lys-104 each participate in a glycyl lysine isopeptide (Lys-Gly) (interchain with G-Cter in ubiquitin) cross-link. A lipid anchor (S-palmitoyl cysteine) is attached at Cys-105. The tract at residues 108-133 (ISSLVLSILMVIITIVTVVIIALNAP) is interaction with VAPA. A helical membrane pass occupies residues 110–130 (SLVLSILMVIITIVTVVIIAL). Residues 131-137 (NAPRLQT) lie on the Extracellular side of the membrane.

It belongs to the CD225/Dispanin family. In terms of assembly, interacts with ATP6V0B. Interacts with CD81. Interacts with SPP1; the interaction reduces OPN expression. Interacts with BRI3. Polyubiquitinated with both 'Lys-48' and 'Lys-63' linkages. Ubiquitination negatively regulates antiviral activity. Lys-24 is the most prevalent ubiquitination site. Post-translationally, phosphorylation at Tyr-20 is required for endosomal and lysosomal location.

The protein resides in the cell membrane. The protein localises to the late endosome membrane. It localises to the early endosome membrane. It is found in the lysosome membrane. Its subcellular location is the cytoplasm. The protein resides in the perinuclear region. IFN-induced antiviral protein which disrupts intracellular cholesterol homeostasis. Inhibits the entry of viruses to the host cell cytoplasm by preventing viral fusion with cholesterol depleted endosomes. May inactivate new enveloped viruses which buds out of the infected cell, by letting them go out with a cholesterol depleted membrane. Active against multiple viruses. Plays a critical role in the structural stability and function of vacuolar ATPase (v-ATPase). Establishes physical contact with the v-ATPase of endosomes which is critical for proper clathrin localization and is also required for the function of the v-ATPase to lower the pH in phagocytic endosomes thus establishing an antiviral state. This is Interferon-induced transmembrane protein 3 from Rattus norvegicus (Rat).